A 236-amino-acid polypeptide reads, in one-letter code: Small ribosomal subunit protein uS2c (236 aa).

This sequence belongs to the universal ribosomal protein uS2 family.

The protein localises to the plastid. Its subcellular location is the chloroplast. This Platanus occidentalis (Sycamore) protein is Small ribosomal subunit protein uS2c (rps2).